A 330-amino-acid polypeptide reads, in one-letter code: Transcription factor TGA5 (330 aa).

Polar residues predominate over residues 1–13 (MGDTSPRTSVSTD). A disordered region spans residues 1-64 (MGDTSPRTSV…REAARKSRLR (64 aa)). The segment covering 35-47 (SSDRSKSKMDQKT) has biased composition (basic and acidic residues). The bZIP domain maps to 44 to 107 (DQKTLRRLAQ…SSGDQAHSTA (64 aa)). Coiled coils occupy residues 45–98 (QKTL…FISS) and 211–244 (EQQS…SLAD). Positions 46–66 (KTLRRLAQNREAARKSRLRKK) are basic motif. Positions 72-86 (LENSRLKLTQLEQEL) are leucine-zipper. Residues 111–327 (AMAFDVEYRR…RALSSLWLAR (217 aa)) enclose the DOG1 domain.

Belongs to the bZIP family. Binds DNA as a dimer. Interaction with the Dof domain protein OBP1 enhances the binding to the ocs element. Interacts with NPR1, NPR3 and NPR4. In terms of tissue distribution, predominantly expressed in roots.

It is found in the nucleus. Functionally, transcriptional activator that binds specifically to the DNA sequence 5'-TGACG-3'. Recognizes ocs elements like the as-1 motif of the cauliflower mosaic virus 35S promoter. Binding to the as-1-like cis elements mediate auxin- and salicylic acid-inducible transcription. May be involved in the induction of the systemic acquired resistance (SAR) via its interaction with NPR1. Could also bind to the Hex-motif (5'-TGACGTGG-3') another cis-acting element found in plant histone promoters. This Arabidopsis thaliana (Mouse-ear cress) protein is Transcription factor TGA5 (TGA5).